The sequence spans 226 residues: Putative 5'-nucleotidase alr3139 (226 aa).

Residues D8, D9, S38, and N89 each contribute to the a divalent metal cation site.

This sequence belongs to the SurE nucleotidase family. A divalent metal cation is required as a cofactor.

It localises to the cytoplasm. The enzyme catalyses a ribonucleoside 5'-phosphate + H2O = a ribonucleoside + phosphate. Nucleotidase that shows phosphatase activity on nucleoside 5'-monophosphates. The protein is Putative 5'-nucleotidase alr3139 of Nostoc sp. (strain PCC 7120 / SAG 25.82 / UTEX 2576).